The chain runs to 474 residues: tRNA-2-methylthio-N(6)-dimethylallyladenosine synthase (474 aa).

An MTTase N-terminal domain is found at 3-120 (KKLHIKTWGC…LPEMINHVQG (118 aa)). [4Fe-4S] cluster contacts are provided by Cys-12, Cys-49, Cys-83, Cys-157, Cys-161, and Cys-164. The 233-residue stretch at 143–375 (RAEGPTAFVS…QQRITQQAME (233 aa)) folds into the Radical SAM core domain. The region spanning 378 to 441 (REMVGTVQRI…ASSLRGILLR (64 aa)) is the TRAM domain.

The protein belongs to the methylthiotransferase family. MiaB subfamily. Monomer. [4Fe-4S] cluster serves as cofactor.

It localises to the cytoplasm. It catalyses the reaction N(6)-dimethylallyladenosine(37) in tRNA + (sulfur carrier)-SH + AH2 + 2 S-adenosyl-L-methionine = 2-methylsulfanyl-N(6)-dimethylallyladenosine(37) in tRNA + (sulfur carrier)-H + 5'-deoxyadenosine + L-methionine + A + S-adenosyl-L-homocysteine + 2 H(+). Catalyzes the methylthiolation of N6-(dimethylallyl)adenosine (i(6)A), leading to the formation of 2-methylthio-N6-(dimethylallyl)adenosine (ms(2)i(6)A) at position 37 in tRNAs that read codons beginning with uridine. The sequence is that of tRNA-2-methylthio-N(6)-dimethylallyladenosine synthase from Yersinia enterocolitica serotype O:8 / biotype 1B (strain NCTC 13174 / 8081).